The following is a 256-amino-acid chain: Proteasome subunit alpha-type 8 (256 aa).

This sequence belongs to the peptidase T1A family. In terms of assembly, component of the outer alpha-ring of the 20S proteasome core which is composed of 28 subunits that are arranged in four stacked rings, resulting in a barrel-shaped structure. The catalytic chamber with the active sites is on the inside of the barrel. Interacts with canonical subunits of the spermatoproteasome, including proteasome activators PSME4 (also called PA200) and PSME3 (also called PA28-gamma). Interacts with proteasome-interacting proteins chaperones, ubiquitin ligases and ubiquitin specific proteases. Interacts with meiotic proteins cyclin dependent kinase CDK1 and the ATPase TRIP13 as well as proteins of the synaptonemal complex SIX6OS1 and SYCE3.

Its subcellular location is the nucleus. Its function is as follows. Component of the spermatoproteasome, a proteasome specifically found in testis that promotes acetylation-dependent degradation of histones, thereby participating actively to the exchange of histones during spermatogenesis. The proteasome is a protein complex that degrades unneeded or damaged proteins by proteolysis, a chemical reaction that breaks peptide bonds. Required for 20S core proteasome assembly, essential for the degradation of meiotic proteins RAD51 and RPA1 at late prophase I and the progression of meiosis I during spermatogenesis. Localizes to the synaptonemal complex, a 'zipper'-like structure that holds homologous chromosome pairs in synapsis during meiotic prophase I. This chain is Proteasome subunit alpha-type 8 (PSMA8), found in Homo sapiens (Human).